The following is a 133-amino-acid chain: Small ribosomal subunit protein uS11 (133 aa).

The interval 1-22 (MPPKTRGAVRKPRKKDKKNIAL) is disordered. The span at 7–17 (GAVRKPRKKDK) shows a compositional bias: basic residues.

It belongs to the universal ribosomal protein uS11 family. Part of the 30S ribosomal subunit. Interacts with proteins S7 and S18. Binds to IF-3.

Functionally, located on the platform of the 30S subunit, it bridges several disparate RNA helices of the 16S rRNA. Forms part of the Shine-Dalgarno cleft in the 70S ribosome. The polypeptide is Small ribosomal subunit protein uS11 (Renibacterium salmoninarum (strain ATCC 33209 / DSM 20767 / JCM 11484 / NBRC 15589 / NCIMB 2235)).